Here is a 554-residue protein sequence, read N- to C-terminus: MTSVHTLPDITATPAWDALRKHHDRIGDTHLRQFFEEDPDRGRELTVTVGDLYIDYSKHRVTRETLRLLVDLARTAKLEERRDQMFAGVHINTSEDRAVLHTALRLPRDAELIVDGRNVVADVHEVLDAMGEFTDRLRSGEWTGATGKRISTVVNIGIGGSDLGPVMVYQALRHYADAGISARFVSNVDPADLIATLADLDPATTLFIVASKTFSTLETLTNATAARRWITDALGDAAVAHHFVAVSTNKRLVDDFGINTDNMFGFWDWVGGRYSVDSAIGLSVMAVIGREAFADFLSGFHIVDRHFQTAPLESNAPVLLGLIGLWYSNFMGAQSRAVLPYSNDLARFAAYLQQLTMESNGKSTRADGSPVTTDTGEIFWGEPGTNGQHAFYQLLHQGTRLVPADFIGFSQPIDDLPTAEGSGSMHDLLMSNFFAQTQVLAFGKTAEEIAAEGTPADIVPHKVMPGNRPSTSILANRLTPSVLGQLIALYEHQVFTEGVIWGIDSFDQWGVELGKTQAKALLPVITADNSPAPQSDSSTDALVRRYRSERGRTS.

Residue Glu-358 is the Proton donor of the active site. Active-site residues include His-389 and Lys-515. Residues 527 to 540 (ADNSPAPQSDSSTD) show a composition bias toward polar residues. The tract at residues 527 to 554 (ADNSPAPQSDSSTDALVRRYRSERGRTS) is disordered. The segment covering 542–554 (LVRRYRSERGRTS) has biased composition (basic and acidic residues).

Belongs to the GPI family.

It localises to the cytoplasm. It carries out the reaction alpha-D-glucose 6-phosphate = beta-D-fructose 6-phosphate. Its pathway is carbohydrate biosynthesis; gluconeogenesis. The protein operates within carbohydrate degradation; glycolysis; D-glyceraldehyde 3-phosphate and glycerone phosphate from D-glucose: step 2/4. In terms of biological role, catalyzes the reversible isomerization of glucose-6-phosphate to fructose-6-phosphate. In Mycobacterium avium (strain 104), this protein is Glucose-6-phosphate isomerase.